We begin with the raw amino-acid sequence, 342 residues long: Anthranilate phosphoribosyltransferase (342 aa).

Residues glycine 90, 93–94 (GD), threonine 98, 100–103 (NIST), 118–126 (KHGNRSVSS), and alanine 130 each bind 5-phospho-alpha-D-ribose 1-diphosphate. An anthranilate-binding site is contributed by glycine 90. Serine 102 serves as a coordination point for Mg(2+). Residue asparagine 121 participates in anthranilate binding. Arginine 176 is a binding site for anthranilate. The Mg(2+) site is built by aspartate 234 and glutamate 235.

This sequence belongs to the anthranilate phosphoribosyltransferase family. In terms of assembly, homodimer. Requires Mg(2+) as cofactor.

It catalyses the reaction N-(5-phospho-beta-D-ribosyl)anthranilate + diphosphate = 5-phospho-alpha-D-ribose 1-diphosphate + anthranilate. It functions in the pathway amino-acid biosynthesis; L-tryptophan biosynthesis; L-tryptophan from chorismate: step 2/5. Functionally, catalyzes the transfer of the phosphoribosyl group of 5-phosphorylribose-1-pyrophosphate (PRPP) to anthranilate to yield N-(5'-phosphoribosyl)-anthranilate (PRA). In Mannheimia succiniciproducens (strain KCTC 0769BP / MBEL55E), this protein is Anthranilate phosphoribosyltransferase.